A 309-amino-acid polypeptide reads, in one-letter code: Probable 4-hydroxy-2-oxoglutarate aldolase, mitochondrial (309 aa).

49 to 50 (SN) is a substrate binding site. Residue Lys-173 is the Schiff-base intermediate with substrate of the active site.

Belongs to the DapA family.

The catalysed reaction is (4S)-4-hydroxy-2-oxoglutarate = glyoxylate + pyruvate. It carries out the reaction (4R)-4-hydroxy-2-oxoglutarate = glyoxylate + pyruvate. With respect to regulation, inhibited by divalent cations. Its function is as follows. Catalyzes the final step in the metabolic pathway of hydroxyproline. Involved in osmoadaptation. The chain is Probable 4-hydroxy-2-oxoglutarate aldolase, mitochondrial from Emericella nidulans (strain FGSC A4 / ATCC 38163 / CBS 112.46 / NRRL 194 / M139) (Aspergillus nidulans).